The primary structure comprises 664 residues: Intraflagellar transport protein 70B (664 aa).

7 TPR repeats span residues 11-44 (DGEF…SSRS), 45-78 (RAGL…HPEL), 153-186 (YDGQ…SGYQ), 188-220 (DLSY…GIRQ), 385-418 (LTEQ…YDET), 423-456 (IPVL…CNDH), and 458-491 (VWKL…NYDN). Residues 507-534 (YIMTSQNEEAEELMRKIEKEEEQLSYGD) adopt a coiled-coil conformation. The stretch at 543 to 576 (CIVNLVIGTLYCAKGNYDFGISRVIKSLEPYHKK) is one TPR 8 repeat.

It belongs to the TTC30/dfy-1/fleer family. In terms of assembly, interacts with the IFT B complex components IFT27, IFT46, IFT74, IFT52, IFT57, IFT80, IFT81 and IFT88. Interacts with KIF17.

Its subcellular location is the cell projection. It is found in the cilium. Functionally, required for polyglutamylation of axonemal tubulin. Plays a role in anterograde intraflagellar transport (IFT), the process by which cilia precursors are transported from the base of the cilium to the site of their incorporation at the tip. This chain is Intraflagellar transport protein 70B (Ift70b), found in Mus musculus (Mouse).